An 871-amino-acid chain; its full sequence is Synaptonemal complex protein 1 (871 aa).

The interval 1–40 (MQKLGFPAMKSLDKPRSLSGSANMYSFSNRKPPDSVSSGS) is disordered. The span at 18–40 (LSGSANMYSFSNRKPPDSVSSGS) shows a compositional bias: polar residues. Coiled coils occupy residues 58–304 (MRTD…DKKN) and 331–608 (LALD…EESK). Disordered regions lie at residues 708–741 (VMSD…RSEH) and 778–871 (SVLS…YAFD). The segment covering 719 to 728 (VNSNKNYSIS) has biased composition (polar residues). A compositionally biased stretch (basic and acidic residues) spans 729–741 (KDSRLGGSKRSEH). A compositionally biased stretch (polar residues) spans 831–847 (LTPQSIAKGTGMTSHAR).

It localises to the nucleus. Its function is as follows. Required for chromosome synapsis and normal fidelity of crossing over. The protein is Synaptonemal complex protein 1 (ZYP1A) of Arabidopsis thaliana (Mouse-ear cress).